The sequence spans 440 residues: Xylose isomerase (440 aa).

Active-site residues include His101 and Asp104. Mg(2+) is bound by residues Glu232, Glu268, His271, Asp296, Asp307, Asp309, and Asp339.

It belongs to the xylose isomerase family. Homotetramer. Mg(2+) serves as cofactor.

The protein localises to the cytoplasm. It catalyses the reaction alpha-D-xylose = alpha-D-xylulofuranose. In Escherichia coli (strain SMS-3-5 / SECEC), this protein is Xylose isomerase.